A 286-amino-acid polypeptide reads, in one-letter code: Divergent deoxyribose-phosphate aldolase-like protein (286 aa).

As to quaternary structure, homodimer. Interacts with ADF; the interaction enhances ADF activity in disassembly of filamentous actin and inhibition of actin polymerization.

Its subcellular location is the cytoplasm. Involved in regulation of actin dynamics. This is Divergent deoxyribose-phosphate aldolase-like protein from Toxoplasma gondii.